The primary structure comprises 87 residues: Apolipoprotein C-I (87 aa).

A signal peptide spans 1 to 26 (MRLFLSLPVLVVVLAMVLEGPAPAQA).

Belongs to the apolipoprotein C1 family.

It is found in the secreted. Its function is as follows. Inhibitor of lipoprotein binding to the low density lipoprotein (LDL) receptor, LDL receptor-related protein, and very low density lipoprotein (VLDL) receptor. Associates with high density lipoproteins (HDL) and the triacylglycerol-rich lipoproteins in the plasma and makes up about 10% of the protein of the VLDL and 2% of that of HDL. Appears to interfere directly with fatty acid uptake and is also the major plasma inhibitor of cholesteryl ester transfer protein (CETP). Binds free fatty acids and reduces their intracellular esterification. Modulates the interaction of APOE with beta-migrating VLDL and inhibits binding of beta-VLDL to the LDL receptor-related protein. In Zalophus californianus (California sealion), this protein is Apolipoprotein C-I (APOC1).